A 241-amino-acid polypeptide reads, in one-letter code: Deoxyribose-phosphate aldolase (241 aa).

Catalysis depends on aspartate 95, which acts as the Proton donor/acceptor. Lysine 159 functions as the Schiff-base intermediate with acetaldehyde in the catalytic mechanism. The Proton donor/acceptor role is filled by lysine 188.

This sequence belongs to the DeoC/FbaB aldolase family. DeoC type 1 subfamily.

It localises to the cytoplasm. The enzyme catalyses 2-deoxy-D-ribose 5-phosphate = D-glyceraldehyde 3-phosphate + acetaldehyde. The protein operates within carbohydrate degradation; 2-deoxy-D-ribose 1-phosphate degradation; D-glyceraldehyde 3-phosphate and acetaldehyde from 2-deoxy-alpha-D-ribose 1-phosphate: step 2/2. Functionally, catalyzes a reversible aldol reaction between acetaldehyde and D-glyceraldehyde 3-phosphate to generate 2-deoxy-D-ribose 5-phosphate. The chain is Deoxyribose-phosphate aldolase from Rhodopirellula baltica (strain DSM 10527 / NCIMB 13988 / SH1).